A 396-amino-acid polypeptide reads, in one-letter code: Aspartate aminotransferase (396 aa).

Positions 34, 130, and 183 each coordinate L-aspartate. Position 246 is an N6-(pyridoxal phosphate)lysine (lysine 246). Arginine 374 contributes to the L-aspartate binding site.

This sequence belongs to the class-I pyridoxal-phosphate-dependent aminotransferase family. As to quaternary structure, homodimer. Requires pyridoxal 5'-phosphate as cofactor.

It localises to the cytoplasm. It catalyses the reaction L-aspartate + 2-oxoglutarate = oxaloacetate + L-glutamate. The chain is Aspartate aminotransferase (aspC) from Salmonella typhi.